The following is a 93-amino-acid chain: UPF0250 protein PSPA7_1111 (93 aa).

The protein belongs to the UPF0250 family.

This is UPF0250 protein PSPA7_1111 from Pseudomonas paraeruginosa (strain DSM 24068 / PA7) (Pseudomonas aeruginosa (strain PA7)).